A 102-amino-acid polypeptide reads, in one-letter code: Large ribosomal subunit protein bL21 (102 aa).

Belongs to the bacterial ribosomal protein bL21 family. Part of the 50S ribosomal subunit. Contacts protein L20.

Its function is as follows. This protein binds to 23S rRNA in the presence of protein L20. This Agathobacter rectalis (strain ATCC 33656 / DSM 3377 / JCM 17463 / KCTC 5835 / VPI 0990) (Eubacterium rectale) protein is Large ribosomal subunit protein bL21.